We begin with the raw amino-acid sequence, 554 residues long: Intraflagellar transport protein 56 (554 aa).

Residues 1–27 form a disordered region; that stretch reads MMLSRAKPAVGGESPHTDKRKKKGRKI. Over residues 18–27 the composition is skewed to basic residues; that stretch reads DKRKKKGRKI. 4 TPR repeats span residues 57–90, 92–125, 151–184, and 468–501; these read DDTNLWIGYCAFHLGDYKRALEEYENATKEENCN, EVWVNLACTYFFLGMYKQAEAAGFKAPKSRLQNR, KEDQLSLASIHYMRSHYQEAIDIYKRILLDNREY, and ANDCYKMGQFYYSAKAFDVLERLDPNPEYWEGKR.

The protein belongs to the IFT56 family. As to quaternary structure, component of the IFT complex B. Interacts with IFT46; the interaction is direct. In terms of tissue distribution, high expression detected in testis. Detected also retina, kidney, lung and brain tissue. The expression level is low in spleen. Expressed in the developing liver. Present in the airway epithelial cells and the testes (at protein level).

It is found in the cell projection. It localises to the cilium. Its function is as follows. Component of the intraflagellar transport (IFT) complex B required for transport of proteins in the motile cilium. Required for transport of specific ciliary cargo proteins related to motility, while it is neither required for IFT complex B assembly or motion nor for cilium assembly. Required for efficient coupling between the accumulation of GLI2 and GLI3 at the ciliary tips and their dissociation from the negative regulator SUFU. Plays a key role in maintaining the integrity of the IFT complex B and the proper ciliary localization of the IFT complex B components. Not required for IFT complex A ciliary localization or function. Essential for maintaining proper microtubule organization within the ciliary axoneme. This is Intraflagellar transport protein 56 from Mus musculus (Mouse).